Consider the following 244-residue polypeptide: Adenosylcobinamide-GDP ribazoletransferase (244 aa).

Helical transmembrane passes span 31–51 (LLFYPVVGLLFGLLLWLASHL), 55–75 (APAPLHAALLLALWVLLSGAL), 109–129 (IAVVVLVLVLLLKFCALWVLV), 134–154 (GGWLVLAPVVGRAAMLGLFMG), and 188–208 (VVLGGSPGLWMLLLSLGVFLW).

The protein belongs to the CobS family. Requires Mg(2+) as cofactor.

It localises to the cell inner membrane. The catalysed reaction is alpha-ribazole + adenosylcob(III)inamide-GDP = adenosylcob(III)alamin + GMP + H(+). The enzyme catalyses alpha-ribazole 5'-phosphate + adenosylcob(III)inamide-GDP = adenosylcob(III)alamin 5'-phosphate + GMP + H(+). It participates in cofactor biosynthesis; adenosylcobalamin biosynthesis; adenosylcobalamin from cob(II)yrinate a,c-diamide: step 7/7. Functionally, joins adenosylcobinamide-GDP and alpha-ribazole to generate adenosylcobalamin (Ado-cobalamin). Also synthesizes adenosylcobalamin 5'-phosphate from adenosylcobinamide-GDP and alpha-ribazole 5'-phosphate. This chain is Adenosylcobinamide-GDP ribazoletransferase, found in Pseudomonas entomophila (strain L48).